We begin with the raw amino-acid sequence, 429 residues long: Glycine betaine monooxygenase oxygenase subunit (429 aa).

Residues 56 to 163 (WLIAGMTCEI…VKTAGGYIFI (108 aa)) form the Rieske domain. Residues Cys-98, His-100, Cys-118, and His-121 each coordinate [2Fe-2S] cluster. Fe cation contacts are provided by His-217 and His-222.

The protein belongs to the bacterial ring-hydroxylating dioxygenase alpha subunit family. In terms of assembly, the system is composed of an oxygenase subunit (GbcA) and a reductase subunit (GbcB). The cofactor is [2Fe-2S] cluster. Fe cation serves as cofactor.

The enzyme catalyses glycine betaine + NADH + O2 + H(+) = N,N-dimethylglycine + formaldehyde + NAD(+) + H2O. Functionally, involved in degradation of glycine betaine. Part of a Rieske-type oxygenase system that catalyzes the conversion of glycine betaine (GB) to dimethylglycine (DMG). This subunit is the terminal oxygenase component of the system. Required for growth on choline and GB, but not for growth on DMG. In Pseudomonas aeruginosa (strain ATCC 15692 / DSM 22644 / CIP 104116 / JCM 14847 / LMG 12228 / 1C / PRS 101 / PAO1), this protein is Glycine betaine monooxygenase oxygenase subunit.